The sequence spans 287 residues: Nucleotide-binding protein Ppro_0977 (287 aa).

8 to 15 contacts ATP; it reads GMSGSGKS. 59 to 62 contributes to the GTP binding site; that stretch reads DIRG.

It belongs to the RapZ-like family.

Functionally, displays ATPase and GTPase activities. In Pelobacter propionicus (strain DSM 2379 / NBRC 103807 / OttBd1), this protein is Nucleotide-binding protein Ppro_0977.